A 299-amino-acid polypeptide reads, in one-letter code: tRNA pseudouridine synthase B (299 aa).

Catalysis depends on Asp-39, which acts as the Nucleophile.

This sequence belongs to the pseudouridine synthase TruB family. Type 1 subfamily.

The catalysed reaction is uridine(55) in tRNA = pseudouridine(55) in tRNA. In terms of biological role, responsible for synthesis of pseudouridine from uracil-55 in the psi GC loop of transfer RNAs. This is tRNA pseudouridine synthase B from Syntrophomonas wolfei subsp. wolfei (strain DSM 2245B / Goettingen).